A 178-amino-acid chain; its full sequence is Co-chaperone protein p23-1 (178 aa).

Residues 2 to 91 form the CS domain; sequence SRHPTVKWAQ…AESKWWNRLT (90 aa). Composition is skewed to acidic residues over residues 112–126 and 136–155; these read DDED…DFGD and DTDE…EGET. Residues 112–178 are disordered; sequence DDEDKGGEGD…DEEGVNAKKD (67 aa). Positions 157-178 are enriched in basic and acidic residues; the sequence is AETKEKKIDGEKDEEGVNAKKD.

Belongs to the p23/wos2 family. In terms of assembly, interacts with HSP90 in an ATP-dependent manner.

Acts as a co-chaperone for HSP90. The sequence is that of Co-chaperone protein p23-1 from Brassica napus (Rape).